A 241-amino-acid polypeptide reads, in one-letter code: Small ribosomal subunit protein uS3 (241 aa).

The region spanning 22 to 91 (VDEYLAYKFH…NPQVTVVKVE (70 aa)) is the KH type-2 domain. The disordered stretch occupies residues 218-241 (EMQQTQPEAPTLEETVEQSGGETQ).

It belongs to the universal ribosomal protein uS3 family. In terms of assembly, part of the 30S ribosomal subunit.

Its function is as follows. Binds the lower part of the 30S subunit head. In Ignicoccus hospitalis (strain KIN4/I / DSM 18386 / JCM 14125), this protein is Small ribosomal subunit protein uS3.